Reading from the N-terminus, the 210-residue chain is Thymidylate kinase (210 aa).

Residue 10–17 (GPEGAGKS) coordinates ATP.

It belongs to the thymidylate kinase family.

The enzyme catalyses dTMP + ATP = dTDP + ADP. In terms of biological role, phosphorylation of dTMP to form dTDP in both de novo and salvage pathways of dTTP synthesis. The protein is Thymidylate kinase of Pseudomonas syringae pv. syringae (strain B728a).